The chain runs to 273 residues: Dermonecrotic toxin LapSicTox-alphaIB1aiii (273 aa).

His5 is an active-site residue. Mg(2+) is bound by residues Glu25 and Asp27. The Nucleophile role is filled by His41. Cystine bridges form between Cys45-Cys51 and Cys47-Cys190. Asp85 contacts Mg(2+). N-linked (GlcNAc...) asparagine glycosylation occurs at Asn250.

This sequence belongs to the arthropod phospholipase D family. Class II subfamily. Mg(2+) serves as cofactor. In terms of tissue distribution, expressed by the venom gland.

Its subcellular location is the secreted. It catalyses the reaction an N-(acyl)-sphingosylphosphocholine = an N-(acyl)-sphingosyl-1,3-cyclic phosphate + choline. It carries out the reaction an N-(acyl)-sphingosylphosphoethanolamine = an N-(acyl)-sphingosyl-1,3-cyclic phosphate + ethanolamine. The catalysed reaction is a 1-acyl-sn-glycero-3-phosphocholine = a 1-acyl-sn-glycero-2,3-cyclic phosphate + choline. The enzyme catalyses a 1-acyl-sn-glycero-3-phosphoethanolamine = a 1-acyl-sn-glycero-2,3-cyclic phosphate + ethanolamine. Dermonecrotic toxins cleave the phosphodiester linkage between the phosphate and headgroup of certain phospholipids (sphingolipid and lysolipid substrates), forming an alcohol (often choline) and a cyclic phosphate. This toxin acts on sphingomyelin (SM). It may also act on ceramide phosphoethanolamine (CPE), lysophosphatidylcholine (LPC) and lysophosphatidylethanolamine (LPE), but not on lysophosphatidylserine (LPS), and lysophosphatidylglycerol (LPG). It acts by transphosphatidylation, releasing exclusively cyclic phosphate products as second products. Induces dermonecrosis, hemolysis, increased vascular permeability, edema, inflammatory response, and platelet aggregation. In Loxosceles apachea (Apache recluse spider), this protein is Dermonecrotic toxin LapSicTox-alphaIB1aiii.